A 1051-amino-acid chain; its full sequence is Ubiquitin-activating enzyme E1 2 (1051 aa).

Basic and acidic residues predominate over residues 1–32 (MLPRKREIVAGEVEDLQKKTRAGEGEATREEG). The interval 1–42 (MLPRKREIVAGEVEDLQKKTRAGEGEATREEGDAAMAGRGNE) is disordered. A run of 2 repeats spans residues 56-194 (GRET…GSVF) and 453-605 (GSTL…QMVI). The segment at 56–605 (GRETMKPLFG…GAKCNTQMVI (550 aa)) is 2 approximate repeats. Residues Ala-472, Asp-498, Arg-509, Lys-522, and 570 to 571 (DN) contribute to the ATP site. Cys-626 serves as the catalytic Glycyl thioester intermediate.

The protein belongs to the ubiquitin-activating E1 family. As to quaternary structure, monomer.

It catalyses the reaction ATP + ubiquitin + [E1 ubiquitin-activating enzyme]-L-cysteine = AMP + diphosphate + S-ubiquitinyl-[E1 ubiquitin-activating enzyme]-L-cysteine.. The protein operates within protein modification; protein ubiquitination. Its function is as follows. Activates ubiquitin by first adenylating its C-terminal glycine residue with ATP, and thereafter linking this residue to the side chain of a cysteine residue in E1, yielding a ubiquitin-E1 thioester and free AMP. This is Ubiquitin-activating enzyme E1 2 (UBA2) from Triticum aestivum (Wheat).